Here is a 96-residue protein sequence, read N- to C-terminus: Glutamyl-tRNA(Gln) amidotransferase subunit C (96 aa).

This sequence belongs to the GatC family. As to quaternary structure, heterotrimer of A, B and C subunits.

It carries out the reaction L-glutamyl-tRNA(Gln) + L-glutamine + ATP + H2O = L-glutaminyl-tRNA(Gln) + L-glutamate + ADP + phosphate + H(+). It catalyses the reaction L-aspartyl-tRNA(Asn) + L-glutamine + ATP + H2O = L-asparaginyl-tRNA(Asn) + L-glutamate + ADP + phosphate + 2 H(+). Allows the formation of correctly charged Asn-tRNA(Asn) or Gln-tRNA(Gln) through the transamidation of misacylated Asp-tRNA(Asn) or Glu-tRNA(Gln) in organisms which lack either or both of asparaginyl-tRNA or glutaminyl-tRNA synthetases. The reaction takes place in the presence of glutamine and ATP through an activated phospho-Asp-tRNA(Asn) or phospho-Glu-tRNA(Gln). The sequence is that of Glutamyl-tRNA(Gln) amidotransferase subunit C from Nostoc sp. (strain PCC 7120 / SAG 25.82 / UTEX 2576).